The primary structure comprises 250 residues: DNA repair protein RecO (250 aa).

The protein belongs to the RecO family.

Its function is as follows. Involved in DNA repair and RecF pathway recombination. The sequence is that of DNA repair protein RecO from Staphylococcus aureus (strain bovine RF122 / ET3-1).